Here is a 475-residue protein sequence, read N- to C-terminus: Aspartyl/glutamyl-tRNA(Asn/Gln) amidotransferase subunit B (475 aa).

This sequence belongs to the GatB/GatE family. GatB subfamily. As to quaternary structure, heterotrimer of A, B and C subunits.

The catalysed reaction is L-glutamyl-tRNA(Gln) + L-glutamine + ATP + H2O = L-glutaminyl-tRNA(Gln) + L-glutamate + ADP + phosphate + H(+). The enzyme catalyses L-aspartyl-tRNA(Asn) + L-glutamine + ATP + H2O = L-asparaginyl-tRNA(Asn) + L-glutamate + ADP + phosphate + 2 H(+). In terms of biological role, allows the formation of correctly charged Asn-tRNA(Asn) or Gln-tRNA(Gln) through the transamidation of misacylated Asp-tRNA(Asn) or Glu-tRNA(Gln) in organisms which lack either or both of asparaginyl-tRNA or glutaminyl-tRNA synthetases. The reaction takes place in the presence of glutamine and ATP through an activated phospho-Asp-tRNA(Asn) or phospho-Glu-tRNA(Gln). The protein is Aspartyl/glutamyl-tRNA(Asn/Gln) amidotransferase subunit B of Lysinibacillus sphaericus (strain C3-41).